The sequence spans 125 residues: Ribonuclease pancreatic (125 aa).

Substrate is bound by residues lysine 7 and arginine 10. Catalysis depends on histidine 12, which acts as the Proton acceptor. Cystine bridges form between cysteine 27-cysteine 85, cysteine 41-cysteine 96, cysteine 59-cysteine 111, and cysteine 66-cysteine 73. N-linked (GlcNAc...) asparagine glycosylation occurs at asparagine 35. Residues 42-46 (KPVNT), lysine 67, and arginine 86 each bind substrate. The Proton donor role is filled by histidine 120.

This sequence belongs to the pancreatic ribonuclease family. As to quaternary structure, monomer. Interacts with and forms tight 1:1 complexes with RNH1. Dimerization of two such complexes may occur. Interaction with RNH1 inhibits this protein. As to expression, pancreas.

It is found in the secreted. It catalyses the reaction an [RNA] containing cytidine + H2O = an [RNA]-3'-cytidine-3'-phosphate + a 5'-hydroxy-ribonucleotide-3'-[RNA].. The enzyme catalyses an [RNA] containing uridine + H2O = an [RNA]-3'-uridine-3'-phosphate + a 5'-hydroxy-ribonucleotide-3'-[RNA].. Its function is as follows. Endonuclease that catalyzes the cleavage of RNA on the 3' side of pyrimidine nucleotides. Acts on single-stranded and double-stranded RNA. This Spalax ehrenbergi (Middle East blind mole rat) protein is Ribonuclease pancreatic (RNASE1).